A 1000-amino-acid chain; its full sequence is Exportin-T (1000 aa).

Belongs to the exportin family.

It localises to the nucleus. Its subcellular location is the cytoplasm. Its function is as follows. tRNA nucleus export receptor which facilitates tRNA translocation across the nuclear pore complex. Involved in pre-tRNA splicing, probably by affecting the interaction of pre-tRNA with splicing endonuclease. This Debaryomyces hansenii (strain ATCC 36239 / CBS 767 / BCRC 21394 / JCM 1990 / NBRC 0083 / IGC 2968) (Yeast) protein is Exportin-T (LOS1).